Here is a 303-residue protein sequence, read N- to C-terminus: Ribosomal RNA small subunit methyltransferase H (303 aa).

S-adenosyl-L-methionine contacts are provided by residues 36–38 (CGH), Asp55, Phe81, Asp101, and Gln108.

The protein belongs to the methyltransferase superfamily. RsmH family.

It localises to the cytoplasm. The enzyme catalyses cytidine(1402) in 16S rRNA + S-adenosyl-L-methionine = N(4)-methylcytidine(1402) in 16S rRNA + S-adenosyl-L-homocysteine + H(+). Specifically methylates the N4 position of cytidine in position 1402 (C1402) of 16S rRNA. The protein is Ribosomal RNA small subunit methyltransferase H of Aster yellows witches'-broom phytoplasma (strain AYWB).